The following is a 690-amino-acid chain: Eukaryotic translation initiation factor 3 subunit B (690 aa).

Residues 1–11 show a composition bias toward basic and acidic residues; that stretch reads MAKKKSEEHSS. Residues 1 to 33 form a disordered region; it reads MAKKKSEEHSSADANDSDYQEEPNFDDPPNFVD. Residues 15 to 25 show a composition bias toward acidic residues; it reads NDSDYQEEPNF. An RRM domain is found at 57–141; it reads SVVVVDNIPK…HTFAVNLFTD (85 aa). WD repeat units lie at residues 207 to 246, 293 to 331, 334 to 369, 442 to 484, and 530 to 575; these read TRER…KIQK, DGMS…LLDL, IKIP…TLME, EIRE…KPSL, and PDHF…IKRT. Residues 614–645 adopt a coiled-coil conformation; sequence QKDRLRLTRASKELLEKRSQLRETFMEYRNKR.

The protein belongs to the eIF-3 subunit B family. Component of the eukaryotic translation initiation factor 3 (eIF-3) complex. The eIF-3 complex interacts with pix. Interacts with mxt.

Its subcellular location is the cytoplasm. Its function is as follows. RNA-binding component of the eukaryotic translation initiation factor 3 (eIF-3) complex, which is involved in protein synthesis of a specialized repertoire of mRNAs and, together with other initiation factors, stimulates binding of mRNA and methionyl-tRNAi to the 40S ribosome. The eIF-3 complex specifically targets and initiates translation of a subset of mRNAs involved in cell proliferation. This Drosophila willistoni (Fruit fly) protein is Eukaryotic translation initiation factor 3 subunit B.